A 150-amino-acid chain; its full sequence is Thyroid hormone-inducible hepatic protein (150 aa).

Residues 83 to 104 (KVAGNETSEAENDAAETEEAEE) form a disordered region. Serine 90 bears the Phosphoserine mark. Acidic residues predominate over residues 90 to 104 (SEAENDAAETEEAEE).

Belongs to the SPOT14 family. Homodimer. Heterodimer with MID1IP1. Interacts with THRB and PLAGL1. As to expression, mainly expressed in tissues that synthesize triglycerides.

The protein localises to the nucleus. It is found in the cytoplasm. Functionally, plays a role in the regulation of lipogenesis, especially in lactating mammary gland. Important for the biosynthesis of triglycerides with medium-length fatty acid chains. May modulate lipogenesis by interacting with MID1IP1 and preventing its interaction with ACACA. May function as transcriptional coactivator. May modulate the transcription factor activity of THRB. The polypeptide is Thyroid hormone-inducible hepatic protein (Thrsp) (Mus musculus (Mouse)).